The sequence spans 208 residues: uncharacterized protein (208 aa).

Disordered stretches follow at residues 1–78 (MDLF…SPTE) and 154–208 (RRRS…PRNY). Over residues 40–51 (KNHKKAQPRRTT) the composition is skewed to basic residues. The segment covering 179–197 (ANSSSPNPTATGSETSYGS) has biased composition (polar residues).

This is an uncharacterized protein from Caenorhabditis elegans.